A 154-amino-acid polypeptide reads, in one-letter code: Protein X (154 aa).

The segment at Pro-68–Phe-117 is mitochondrial targeting sequence.

This sequence belongs to the orthohepadnavirus protein X family. In terms of assembly, may form homodimer. May interact with host CEBPA, CFLAR, CREB1, DDB1, E4F1, HBXIP, HSPD1/HSP60, NFKBIA, POLR2E and SMAD4. Interacts with host SMC5-SMC6 complex and induces its degradation. Interacts with host TRPC4AP; leading to prevent ubiquitination of TRPC4AP. Interacts with host PLSCR1; this interaction promotes ubiquitination and degradation of HBx and impairs HBx-mediated cell proliferation. In terms of processing, a fraction may be phosphorylated in insect cells and HepG2 cells, a human hepatoblastoma cell line. Phosphorylated in vitro by host protein kinase C or mitogen-activated protein kinase. N-acetylated in insect cells.

It localises to the host cytoplasm. The protein localises to the host nucleus. Its subcellular location is the host mitochondrion. Multifunctional protein that plays a role in silencing host antiviral defenses and promoting viral transcription. Does not seem to be essential for HBV infection. May be directly involved in development of cirrhosis and liver cancer (hepatocellular carcinoma). Most of cytosolic activities involve modulation of cytosolic calcium. The effect on apoptosis is controversial depending on the cell types in which the studies have been conducted. May induce apoptosis by localizing in mitochondria and causing loss of mitochondrial membrane potential. May also modulate apoptosis by binding host CFLAR, a key regulator of the death-inducing signaling complex (DISC). Promotes viral transcription by using the host E3 ubiquitin ligase DDB1 to target the SMC5-SMC6 complex to proteasomal degradation. This host complex would otherwise bind to viral episomal DNA, and prevents its transcription. Moderately stimulates transcription of many different viral and cellular transcription elements. Promoters and enhancers stimulated by HBx contain DNA binding sites for NF-kappa-B, AP-1, AP-2, c-EBP, ATF/CREB, or the calcium-activated factor NF-AT. This Homo sapiens (Human) protein is Protein X.